The following is a 212-amino-acid chain: MAKLLVIKASMVDKSISFSEELTNRFVKYYLESNPNDEVITLDLNEVPMAQKTLNGSNLKNFFNQEDSDFYIDQLKSVHKVIFSCPMTNFNISATAKNYLDHVLVANKTFSYKYSKKGDAIGLLNHLSVQLLTTQGAPLGWYPWGNHTENLKGTFEFMGTKVVTPILVDGTKIPENANKTPVERINEFDSVIRLKAKEFAALPAVDWKPLEQ.

Residues Ser-10 and 17 to 19 (SFS) each bind FMN.

It belongs to the azoreductase type 1 family. In terms of assembly, homodimer. FMN serves as cofactor.

It catalyses the reaction 2 a quinone + NADH + H(+) = 2 a 1,4-benzosemiquinone + NAD(+). The catalysed reaction is N,N-dimethyl-1,4-phenylenediamine + anthranilate + 2 NAD(+) = 2-(4-dimethylaminophenyl)diazenylbenzoate + 2 NADH + 2 H(+). Functionally, quinone reductase that provides resistance to thiol-specific stress caused by electrophilic quinones. Also exhibits azoreductase activity. Catalyzes the reductive cleavage of the azo bond in aromatic azo compounds to the corresponding amines. In Malacoplasma penetrans (strain HF-2) (Mycoplasma penetrans), this protein is FMN-dependent NADH:quinone oxidoreductase.